Consider the following 272-residue polypeptide: Glutamate racemase (272 aa).

Substrate is bound by residues 12–13 (DS) and 44–45 (YG). Cys75 acts as the Proton donor/acceptor in catalysis. 76-77 (NT) is a binding site for substrate. The active-site Proton donor/acceptor is the Cys185. Position 186-187 (186-187 (TH)) interacts with substrate.

It belongs to the aspartate/glutamate racemases family.

It catalyses the reaction L-glutamate = D-glutamate. It functions in the pathway cell wall biogenesis; peptidoglycan biosynthesis. In terms of biological role, provides the (R)-glutamate required for cell wall biosynthesis. This is Glutamate racemase from Mycobacterium leprae (strain TN).